The following is a 688-amino-acid chain: Ethylmalonyl-CoA mutase (688 aa).

The 130-residue stretch at 530 to 659 (TPRLVVGKPG…VGLAKVVERA (130 aa)) folds into the B12-binding domain. An adenosylcob(III)alamin-binding site is contributed by His543. Positions 666–688 (DRADTEAGVPGAPKRNESGAQVF) are disordered.

This sequence belongs to the methylmalonyl-CoA mutase family. Adenosylcob(III)alamin is required as a cofactor.

It catalyses the reaction (2R)-ethylmalonyl-CoA = (2S)-methylsuccinyl-CoA. Functionally, radical enzyme that catalyzes the transformation of (2R)-ethylmalonyl-CoA to (2S)-methylsuccinyl-CoA. Is involved in the ethylmalonyl-CoA pathway for acetyl-CoA assimilation required for M.extorquens growth on one- and two-carbon compounds such as ethylamine, methanol or ethanol as sole carbon source. This enzyme acts as a regulatory metabolic control point in this pathway, that allows M.extorquens to efficiently restore metabolic balance when challenged with a sudden change in the growth substrate. The chain is Ethylmalonyl-CoA mutase from Methylorubrum extorquens (strain ATCC 14718 / DSM 1338 / JCM 2805 / NCIMB 9133 / AM1) (Methylobacterium extorquens).